The primary structure comprises 81 residues: Small ribosomal subunit protein bS18 (81 aa).

This sequence belongs to the bacterial ribosomal protein bS18 family. As to quaternary structure, part of the 30S ribosomal subunit. Forms a tight heterodimer with protein bS6.

Functionally, binds as a heterodimer with protein bS6 to the central domain of the 16S rRNA, where it helps stabilize the platform of the 30S subunit. The sequence is that of Small ribosomal subunit protein bS18 from Chlamydia muridarum (strain MoPn / Nigg).